The sequence spans 428 residues: MQKLLIEGGHDLTGQVRISGAKNSAVALLPAAILADSAVTIEGLPEISDVDTLGDLLEEIGGSVSRDGQDITIHPEKMMAMPLPNGKVKKLRASYYFMGAMLGKFNKAVIGLPGGCFLGPRPIDQHIKGFEALGAEVTNEQGAIYLRANELRGARIYLDVVSVGATINIMLAAVKAKGRTTIENAAKEPEIIDVATLLTNMGAKIKGVGTDVIRIDGVPSLHGCRHTIIPDRIEAGTYAIAAAAKGKEVIIDNVIPQHLESLIAKLREMDVTIEESDEQLYIARNRPLKSVDIKTLVYPGFPTDLQQPFTSLLTQATHSGVITDTIYSARLKHIDELRRMNAVIKVEGGSVIVSGPVQLEGARVKASDLRAGASLIIAGLLADGITEITGLDHIDRGYERLTEKLSSLGANIWREEMTDIEIMQDQNM.

22 to 23 (KN) provides a ligand contact to phosphoenolpyruvate. Arg92 provides a ligand contact to UDP-N-acetyl-alpha-D-glucosamine. Cys116 serves as the catalytic Proton donor. Cys116 carries the 2-(S-cysteinyl)pyruvic acid O-phosphothioketal modification. Residues 121–125 (RPIDQ), Asp304, and Ile326 contribute to the UDP-N-acetyl-alpha-D-glucosamine site.

This sequence belongs to the EPSP synthase family. MurA subfamily.

It localises to the cytoplasm. It carries out the reaction phosphoenolpyruvate + UDP-N-acetyl-alpha-D-glucosamine = UDP-N-acetyl-3-O-(1-carboxyvinyl)-alpha-D-glucosamine + phosphate. The protein operates within cell wall biogenesis; peptidoglycan biosynthesis. Cell wall formation. Adds enolpyruvyl to UDP-N-acetylglucosamine. The polypeptide is UDP-N-acetylglucosamine 1-carboxyvinyltransferase 2 (Oceanobacillus iheyensis (strain DSM 14371 / CIP 107618 / JCM 11309 / KCTC 3954 / HTE831)).